The chain runs to 364 residues: Trans-enoyl reductase sthE (364 aa).

51–54 (TDYK) serves as a coordination point for NADP(+). A substrate-binding site is contributed by 137–144 (WGTAALAI). Residues 172-175 (ATAT), 195-198 (SESS), Tyr-213, and 261-262 (LE) each bind NADP(+). Substrate is bound at residue 281–285 (GFEGQ). 351-352 (VK) lines the NADP(+) pocket.

The protein belongs to the zinc-containing alcohol dehydrogenase family. Monomer.

It carries out the reaction 7 malonyl-CoA + acetyl-CoA + 10 AH2 + 5 S-adenosyl-L-methionine + 2 H(+) = dehydroprobetaenone I + 10 A + 5 S-adenosyl-L-homocysteine + 7 CO2 + 8 CoA + 6 H2O. It functions in the pathway mycotoxin biosynthesis. Trans-enoyl reductase; part of the gene cluster that mediates the biosynthesis of the phytotoxin stemphyloxin II. The first step of the pathway is the synthesis of dehydroprobetaenone I by the polyketide synthase sthA and the enoyl reductase sthE via condensation of one acetyl-CoA starter unit with 7 malonyl-CoA units and 5 methylations. The C-terminal reductase (R) domain of sthA catalyzes the reductive release of the polyketide chain. Because sthA lacks a designated enoylreductase (ER) domain, the required activity is provided the enoyl reductase sthE. The short-chain dehydrogenase/reductase sthC then catalyzes reduction of dehydroprobetaenone I to probetaenone I. The cytochrome P450 monooxygenase sthF catalyzes successive epoxidation, oxidation (resulting from epoxide opening) and hydroxylation to install a tertiary alcohol in the decaline ring to yield betaenone C from dehydroprobetaenone I and betaenone B from probetaenone I. The FAD-linked oxidoreductase sthB is responsible for the conversion of betaenone C to betaenone A via an intramolecular aldol reaction between C-1 and C-17 to form the bridged tricyclic system in betaenone A. Finally, the cytochrome P450 monooxygenase sthD catalyzes the hydroxylation of C-15 to afford the final metabolite stemphyloxin II. The protein is Trans-enoyl reductase sthE of Phaeosphaeria nodorum (strain SN15 / ATCC MYA-4574 / FGSC 10173) (Glume blotch fungus).